The chain runs to 430 residues: Asparagine--tRNA ligase (430 aa).

It belongs to the class-II aminoacyl-tRNA synthetase family. As to quaternary structure, homodimer.

The protein resides in the cytoplasm. The catalysed reaction is tRNA(Asn) + L-asparagine + ATP = L-asparaginyl-tRNA(Asn) + AMP + diphosphate + H(+). In Bacillus velezensis (strain DSM 23117 / BGSC 10A6 / LMG 26770 / FZB42) (Bacillus amyloliquefaciens subsp. plantarum), this protein is Asparagine--tRNA ligase.